We begin with the raw amino-acid sequence, 259 residues long: 5'-nucleotidase SurE (259 aa).

Residues aspartate 8, aspartate 9, serine 41, and asparagine 99 each contribute to the a divalent metal cation site.

It belongs to the SurE nucleotidase family. The cofactor is a divalent metal cation.

It localises to the cytoplasm. The enzyme catalyses a ribonucleoside 5'-phosphate + H2O = a ribonucleoside + phosphate. Nucleotidase that shows phosphatase activity on nucleoside 5'-monophosphates. The polypeptide is 5'-nucleotidase SurE (Synechococcus sp. (strain JA-3-3Ab) (Cyanobacteria bacterium Yellowstone A-Prime)).